A 239-amino-acid polypeptide reads, in one-letter code: 2-C-methyl-D-erythritol 4-phosphate cytidylyltransferase (239 aa).

This sequence belongs to the IspD/TarI cytidylyltransferase family. IspD subfamily.

The catalysed reaction is 2-C-methyl-D-erythritol 4-phosphate + CTP + H(+) = 4-CDP-2-C-methyl-D-erythritol + diphosphate. The protein operates within isoprenoid biosynthesis; isopentenyl diphosphate biosynthesis via DXP pathway; isopentenyl diphosphate from 1-deoxy-D-xylulose 5-phosphate: step 2/6. Functionally, catalyzes the formation of 4-diphosphocytidyl-2-C-methyl-D-erythritol from CTP and 2-C-methyl-D-erythritol 4-phosphate (MEP). The polypeptide is 2-C-methyl-D-erythritol 4-phosphate cytidylyltransferase (Acidobacterium capsulatum (strain ATCC 51196 / DSM 11244 / BCRC 80197 / JCM 7670 / NBRC 15755 / NCIMB 13165 / 161)).